The chain runs to 67 residues: Protein AaeX (67 aa).

The next 2 helical transmembrane spans lie at 3 to 23 (LFPVIVVFGLSFPPIFFELLL) and 43 to 63 (FVWHPALFNTALYCCLFYLIS).

The protein belongs to the AaeX family.

It localises to the cell membrane. The sequence is that of Protein AaeX from Salmonella agona (strain SL483).